A 310-amino-acid polypeptide reads, in one-letter code: Serine protease 30 (310 aa).

The N-terminal stretch at 1–21 (MESRARCIFLLLLQILTRARG) is a signal peptide. The propeptide at 22 to 36 (DILPSVCGHSRDAGK) is activation peptide. A Peptidase S1 domain is found at 37-277 (IVGGQDALEG…YVDWIQRILA (241 aa)). C63 and C79 are oxidised to a cystine. Catalysis depends on charge relay system residues H78 and D128. Intrachain disulfides connect C161-C235, C191-C214, and C225-C253. S229 functions as the Charge relay system in the catalytic mechanism. N-linked (GlcNAc...) asparagine glycosylation is found at N238 and N279. The GPI-anchor amidated serine moiety is linked to residue S281. The propeptide at 282–310 (DAYGYHSSASAAYQMLLPVLLAVALPGSL) is removed in mature form.

This sequence belongs to the peptidase S1 family. Expressed primarily in distal gut.

Its subcellular location is the cell membrane. Its activity is regulated as follows. Inhibited by aprotinin, leupeptin, benzamidine and soybean trypsin inhibitor. Partially inhibited by PMSF and DFP. Functionally, selectively cleaves synthetic peptide substrates of trypsin. Activates the epithelial sodium channel ENaC. The chain is Serine protease 30 (Prss30) from Mus musculus (Mouse).